The following is a 363-amino-acid chain: MMHITHLDIRNFRNLKHIELHPSKGVNILSGANSSGKTSFLEAIYLLGLGRSFRTVQLISAIQAGMESLRVVAKVKQVGGSHTAGVEFGPAGFRARINKDTVKKRSQLATQLPLLYMSSYSHVVLDGGPRYRRQWLDWSLFHLEPGFHDLWWCYQRTLKQRNHVLRVHKPSWQQEINAWNKKLSTYGEQITSLREAILFKLQDSVSQLFTALAHQPISPVTMEFKQGWARTVRLEEILNESLNYDRAAGYTRYGPHRAEVAFYVDGKDVREILSRGQQKVFCYSLALSQANLLYRTKEQNCIFLIDDFTSELDADHRKRLLTLLNKLGMQVFATTIESLGSEIKAHPNIKEFHVKLGQVEEMV.

Position 31–38 (31–38 (GANSSGKT)) interacts with ATP.

The protein belongs to the RecF family.

The protein localises to the cytoplasm. Functionally, the RecF protein is involved in DNA metabolism; it is required for DNA replication and normal SOS inducibility. RecF binds preferentially to single-stranded, linear DNA. It also seems to bind ATP. This is DNA replication and repair protein RecF from Nitrosococcus oceani (strain ATCC 19707 / BCRC 17464 / JCM 30415 / NCIMB 11848 / C-107).